A 110-amino-acid chain; its full sequence is DNA-binding protein Pars_1791 (110 aa).

This sequence belongs to the PDCD5 family.

The polypeptide is DNA-binding protein Pars_1791 (Pyrobaculum arsenaticum (strain DSM 13514 / JCM 11321 / PZ6)).